The sequence spans 162 residues: Cytochrome c-type biogenesis protein CcmE (162 aa).

Residues 1–8 (MNPRRKKR) are Cytoplasmic-facing. A helical; Signal-anchor for type II membrane protein membrane pass occupies residues 9 to 29 (LALVVGLIGGVAAVASLLLYA). The Periplasmic segment spans residues 30–162 (LNTNLNLFYT…YTETQKGGSR (133 aa)). Heme-binding residues include H131 and Y135.

The protein belongs to the CcmE/CycJ family.

The protein resides in the cell inner membrane. Functionally, heme chaperone required for the biogenesis of c-type cytochromes. Transiently binds heme delivered by CcmC and transfers the heme to apo-cytochromes in a process facilitated by CcmF and CcmH. The chain is Cytochrome c-type biogenesis protein CcmE from Shewanella amazonensis (strain ATCC BAA-1098 / SB2B).